Consider the following 530-residue polypeptide: Probable flavin-containing monooxygenase 1 (530 aa).

Residues 17-21 (GAGVS), Glu38, 46-47 (VW), and 58-59 (QS) contribute to the FAD site. Residue 219–222 (SAID) participates in NADP(+) binding.

Belongs to the FMO family. It depends on FAD as a cofactor.

Required for the establishment of systemic acquired resistance (SAR). Not involved in local defense mechanisms. Confers a salicylic acid-dependent (SA) resistance to virulent pathogens such as P.syringae pv tomato and H.parasitica. In Arabidopsis thaliana (Mouse-ear cress), this protein is Probable flavin-containing monooxygenase 1 (FMO1).